We begin with the raw amino-acid sequence, 366 residues long: Galactoside alpha-(1,2)-fucosyltransferase 1 (366 aa).

Residues 1-8 lie on the Cytoplasmic side of the membrane; the sequence is MWPPSHRQ. Residues 9-25 traverse the membrane as a helical; Signal-anchor for type II membrane protein segment; it reads LCLAFLLVCVLSVISFF. Over 26–366 the chain is Lumenal; sequence LHIHQDSFPH…LSSLWTLAKP (341 aa). N-linked (GlcNAc...) asparagine glycosylation is found at N66, N302, and N328.

Belongs to the glycosyltransferase 11 family.

The protein resides in the golgi apparatus. It localises to the golgi stack membrane. It carries out the reaction a beta-D-galactosyl-(1-&gt;4)-N-acetyl-beta-D-glucosaminyl derivative + GDP-beta-L-fucose = an alpha-L-Fuc-(1-&gt;2)-beta-D-Gal-(1-&gt;4)-beta-D-GlcNAc derivative + GDP + H(+). The catalysed reaction is a ganglioside GA1 + GDP-beta-L-fucose = a ganglioside Fuc-GA1 + GDP + H(+). It catalyses the reaction a beta-D-Gal-(1-&gt;3)-beta-D-GlcNAc-(1-&gt;3)-beta-D-Gal-(1-&gt;4)-beta-D-Glc-(1&lt;-&gt;1')-Cer(d18:1(4E)) + GDP-beta-L-fucose = alpha-L-fucosyl-(1-&gt;2)- beta-D-galactosyl-(1-&gt;3)-N-acetyl-beta-D-glucosaminyl-(1-&gt;3)-beta-D-galactosyl-(1-&gt;4)-beta-D-glucosyl-(1&lt;-&gt;1')-N-acylsphing-4-enine + GDP + H(+). The enzyme catalyses a neolactoside nLc4Cer(d18:1(4E)) + GDP-beta-L-fucose = a neolactoside IV(2)-alpha-Fuc-nLc4Cer(d18:1(4E)) + GDP + H(+). It carries out the reaction a ganglioside GM1 + GDP-beta-L-fucose = a ganglioside Fuc-GM1 + GDP + H(+). The catalysed reaction is beta-D-galactosyl-(1-&gt;3)-N-acetyl-D-galactosamine + GDP-beta-L-fucose = alpha-L-fucosyl-(1-&gt;2)-beta-D-galactosyl-(1-&gt;3)-N-acetyl-D-galactosamine + GDP + H(+). It functions in the pathway protein modification; protein glycosylation. Its function is as follows. Catalyzes the transfer of L-fucose, from a guanosine diphosphate-beta-L-fucose, to the terminal galactose residue of glycoconjugates through an alpha(1,2) linkage leading to H antigen synthesis that is an intermediate substrate in the synthesis of ABO blood group antigens. H antigen is essential for maturation of the glomerular layer of the main olfactory bulb, in cell migration and early cell-cell contacts during tumor associated angiogenesis. Preferentially fucosylates soluble lactose and to a lesser extent fucosylates glycolipids gangliosides GA1 and GM1a. This Pan troglodytes (Chimpanzee) protein is Galactoside alpha-(1,2)-fucosyltransferase 1.